Here is a 238-residue protein sequence, read N- to C-terminus: Succinate dehydrogenase iron-sulfur subunit (238 aa).

Positions 1–97 (MKLEFSIYRY…KIVIRPLPGL (97 aa)) constitute a 2Fe-2S ferredoxin-type domain. Residues Cys-55, Cys-60, and Cys-75 each contribute to the [2Fe-2S] cluster site. The 4Fe-4S ferredoxin-type domain occupies 139–169 (QREKLDGLYECILCACCSTSCPSFWWNPDKF). [4Fe-4S] cluster is bound by residues Cys-149, Cys-152, and Cys-155. [3Fe-4S] cluster is bound at residue Cys-159. Trp-164 provides a ligand contact to a ubiquinone. Cys-206 and Cys-212 together coordinate [3Fe-4S] cluster. [4Fe-4S] cluster is bound at residue Cys-216.

The protein belongs to the succinate dehydrogenase/fumarate reductase iron-sulfur protein family. As to quaternary structure, part of an enzyme complex containing four subunits: a flavoprotein, an iron-sulfur, cytochrome b-556, and a hydrophobic anchor protein. It depends on [2Fe-2S] cluster as a cofactor. Requires [3Fe-4S] cluster as cofactor. The cofactor is [4Fe-4S] cluster.

The enzyme catalyses a quinone + succinate = fumarate + a quinol. It functions in the pathway carbohydrate metabolism; tricarboxylic acid cycle; fumarate from succinate (bacterial route): step 1/1. Its function is as follows. Two distinct, membrane-bound, FAD-containing enzymes are responsible for the catalysis of fumarate and succinate interconversion; the fumarate reductase is used in anaerobic growth, and the succinate dehydrogenase is used in aerobic growth. This is Succinate dehydrogenase iron-sulfur subunit (sdhB) from Salmonella typhimurium (strain LT2 / SGSC1412 / ATCC 700720).